Consider the following 178-residue polypeptide: Protein PilI (178 aa).

Positions 34–173 (SWSGIGFRMG…PHALAQHQGF (140 aa)) constitute a CheW-like domain.

May be a part of a signal-transduction system that regulates twitching motility by controlling pilus function (extension and retraction). In Pseudomonas aeruginosa (strain ATCC 15692 / DSM 22644 / CIP 104116 / JCM 14847 / LMG 12228 / 1C / PRS 101 / PAO1), this protein is Protein PilI (pilI).